The following is a 397-amino-acid chain: Phosphoglycerate kinase (397 aa).

Substrate is bound by residues 21–23 (DFN), Arg-36, 59–62 (HCGR), Arg-118, and Arg-151. ATP contacts are provided by residues Lys-201, Glu-323, and 353-356 (GGDT).

It belongs to the phosphoglycerate kinase family. In terms of assembly, monomer.

The protein localises to the cytoplasm. The catalysed reaction is (2R)-3-phosphoglycerate + ATP = (2R)-3-phospho-glyceroyl phosphate + ADP. Its pathway is carbohydrate degradation; glycolysis; pyruvate from D-glyceraldehyde 3-phosphate: step 2/5. The protein is Phosphoglycerate kinase of Bartonella quintana (strain Toulouse) (Rochalimaea quintana).